The following is a 313-amino-acid chain: Non-functional target of rapamycin complex subunit LST8-2 (313 aa).

WD repeat units follow at residues 1 to 35 (MFENKPDDSPVYLATASHDQTIRLWQARTGRCYFS), 38 to 76 (YPDLHVNRLELTPEKGKLVAACNPHIRLFDLRSYNPHIP), 82 to 121 (SHTKNVMAVGFQYTGHMMYSGSEDGSVKIWDLRVRECQRE), 123 to 162 (RSVSPVNTVVLHPNQTELISGDQNGNIRVWDLRADLCSCE), 166 to 205 (EVGTPIRSLTVMWDGTMVVAANDRGTCYVWRSLCERQTMT), 215 to 255 (AHNS…LEKV), and 258 to 297 (GHERWVWDCDFSMDGEYLVTASSDTTARLWSMRAGKEEMV).

It belongs to the WD repeat LST8 family.

Probable non-functional protein. This chain is Non-functional target of rapamycin complex subunit LST8-2, found in Arabidopsis thaliana (Mouse-ear cress).